A 141-amino-acid chain; its full sequence is Large ribosomal subunit protein uL11 (141 aa).

It belongs to the universal ribosomal protein uL11 family. In terms of assembly, part of the ribosomal stalk of the 50S ribosomal subunit. Interacts with L10 and the large rRNA to form the base of the stalk. L10 forms an elongated spine to which L12 dimers bind in a sequential fashion forming a multimeric L10(L12)X complex. In terms of processing, one or more lysine residues are methylated.

Forms part of the ribosomal stalk which helps the ribosome interact with GTP-bound translation factors. This is Large ribosomal subunit protein uL11 from Streptococcus thermophilus (strain CNRZ 1066).